Consider the following 266-residue polypeptide: F-actin-capping protein subunit beta (266 aa).

Belongs to the F-actin-capping protein beta subunit family. Component of the F-actin capping complex, composed of a heterodimer of an alpha and a beta subunit.

The protein resides in the cytoplasm. It localises to the cytoskeleton. The protein localises to the actin patch. In terms of biological role, F-actin-capping proteins bind in a Ca(2+)-independent manner to the fast growing ends of actin filaments (barbed end) thereby blocking the exchange of subunits at these ends. Unlike other capping proteins (such as gelsolin and severin), these proteins do not sever actin filaments. The sequence is that of F-actin-capping protein subunit beta (cap2) from Emericella nidulans (strain FGSC A4 / ATCC 38163 / CBS 112.46 / NRRL 194 / M139) (Aspergillus nidulans).